The primary structure comprises 80 residues: DNA-binding protein HU-like (80 aa).

It belongs to the bacterial histone-like protein family.

In terms of biological role, histone-like DNA-binding protein which is capable of wrapping DNA to stabilize it, and thus to prevent its denaturation under extreme environmental conditions. The sequence is that of DNA-binding protein HU-like from Rickettsia rickettsii (strain Sheila Smith).